The sequence spans 321 residues: DNA-directed RNA polymerase subunit alpha (321 aa).

Residues 1–235 (MAYQIECLET…DLFSPLKEVP (235 aa)) form an alpha N-terminal domain (alpha-NTD) region. The segment at 252-321 (QIPIEQLNLS…TLPPQKAARN (70 aa)) is alpha C-terminal domain (alpha-CTD).

This sequence belongs to the RNA polymerase alpha chain family. Homodimer. In cyanobacteria the RNAP catalytic core is composed of 2 alpha, 1 beta, 1 beta', 1 gamma and 1 omega subunit. When a sigma factor is associated with the core the holoenzyme is formed, which can initiate transcription.

The catalysed reaction is RNA(n) + a ribonucleoside 5'-triphosphate = RNA(n+1) + diphosphate. Functionally, DNA-dependent RNA polymerase catalyzes the transcription of DNA into RNA using the four ribonucleoside triphosphates as substrates. This Thermosynechococcus vestitus (strain NIES-2133 / IAM M-273 / BP-1) protein is DNA-directed RNA polymerase subunit alpha.